We begin with the raw amino-acid sequence, 77 residues long: U8-lycotoxin-Ls1v (77 aa).

The first 20 residues, 1–20 (MKLIIFTGLVLFGIVSLIEA), serve as a signal peptide directing secretion. Residues 21 to 26 (QAENEK) constitute a propeptide that is removed on maturation.

This sequence belongs to the neurotoxin 19 (CSTX) family. 08 (U8-Lctx) subfamily. Post-translationally, contains 4 disulfide bonds. Expressed by the venom gland.

Its subcellular location is the secreted. This is U8-lycotoxin-Ls1v from Lycosa singoriensis (Wolf spider).